The following is a 536-amino-acid chain: Beta-hexosaminidase subunit beta (536 aa).

Positions 1–31 (MPQSPRSAPGLLLLQALVSLVSLALVAPARL) are cleaved as a signal peptide. A glycan (N-linked (GlcNAc...) asparagine) is linked at Asn-63. Cys-70 and Cys-116 are oxidised to a cystine. 2 N-linked (GlcNAc...) asparagine glycosylation sites follow: Asn-169 and Asn-306. 2 disulfides stabilise this stretch: Cys-288–Cys-339 and Cys-513–Cys-530. The Proton donor role is filled by Glu-334.

The protein belongs to the glycosyl hydrolase 20 family. In terms of assembly, there are 3 forms of beta-hexosaminidase: hexosaminidase A is a heterodimer composed of one subunit alpha and one subunit beta (chain A and B); hexosaminidase B is a homodimer of two beta subunits (two chains A and B); hexosaminidase S is a homodimer of two alpha subunits. The composition of the dimer (isozyme A versus isozyme S) has a significant effect on the substrate specificity of the alpha subunit active site.

The protein localises to the lysosome. The protein resides in the cytoplasmic vesicle. It localises to the secretory vesicle. It is found in the cortical granule. It carries out the reaction Hydrolysis of terminal non-reducing N-acetyl-D-hexosamine residues in N-acetyl-beta-D-hexosaminides.. The enzyme catalyses N-acetyl-beta-D-galactosaminyl-(1-&gt;4)-beta-D-3-sulfogalactosyl-(1-&gt;4)-beta-D-glucosyl-(1&lt;-&gt;1')-ceramide + H2O = a beta-D-3-sulfogalactosyl-(1-&gt;4)-beta-D-glucosyl-(1&lt;-&gt;1')-ceramide + N-acetyl-beta-D-galactosamine. It catalyses the reaction a ganglioside GM2 (d18:1(4E)) + H2O = a ganglioside GM3 (d18:1(4E)) + N-acetyl-beta-D-galactosamine. The catalysed reaction is a ganglioside GM2 + H2O = a ganglioside GM3 + N-acetyl-beta-D-galactosamine. It carries out the reaction beta-D-GalNAc-(1-&gt;4)-alpha-L-IdoA-(1-&gt;3)-beta-D-GalNAc-4-sulfate-(1-&gt;4)-alpha-L-IdoA-(1-&gt;3)-D-GalNAc-4-sulfate + H2O = alpha-L-IdoA-(1-&gt;3)-beta-D-GalNAc-4-sulfate-(1-&gt;4)-alpha-L-IdoA-(1-&gt;3)-D-GalNAc-4-sulfate + N-acetyl-D-galactosamine. The enzyme catalyses N-acetyl-beta-D-6-sulfogalactosaminyl-(1-&gt;4)-alpha-L-iduronyl-(1-&gt;3)-N-acetyl-D-6-sulfogalactosamine + H2O = alpha-L-iduronyl-(1-&gt;3)-N-acetyl-D-6-sulfogalactosamine + N-acetyl-D-6-sulfogalactosamine. Addition of GM2A stimulates the hydrolysis of sulfated glycosphingolipid SM2 and the ganglioside GM2. Functionally, hydrolyzes the non-reducing end N-acetyl-D-hexosamine and/or sulfated N-acetyl-D-hexosamine of glycoconjugates, such as the oligosaccharide moieties from proteins and neutral glycolipids, or from certain mucopolysaccharides. The isozyme B does not hydrolyze each of these substrates, however hydrolyzes efficiently neutral oligosaccharide. Only the isozyme A is responsible for the degradation of GM2 gangliosides in the presence of GM2A. During fertilization is responsible, at least in part, for the zona block to polyspermy. Present in the cortical granules of non-activated oocytes, is exocytosed during the cortical reaction in response to oocyte activation and inactivates the sperm galactosyltransferase-binding site, accounting for the block in sperm binding to the zona pellucida. This is Beta-hexosaminidase subunit beta from Mus musculus (Mouse).